Reading from the N-terminus, the 151-residue chain is Neuroglobin (151 aa).

The region spanning 1–149 (MERPEPELIR…VVQAMSRGWD (149 aa)) is the Globin domain. 2 residues coordinate heme b: His-64 and His-96.

Belongs to the globin family. In terms of assembly, monomer. Homodimer and homotetramer; disulfide-linked. Mainly monomeric but also detected as part of homodimers and homotetramers. Interacts with 14-3-3 proteins; regulates the phosphorylation of NGB. Could interact (ferrous form) with G-alpha(i) proteins (GTP-bound form). In terms of processing, phosphorylated during hypoxia by ERK1/ERK2. Phosphorylation regulates the heme pocket hexacoordination preventing the association of His-64 with the heme metal center. Thereby, promotes the access of dioxygen and nitrite to the heme and stimulates the nitrite reductase activity. Phosphorylation during hypoxia is stabilized by 14-3-3 proteins.

Its subcellular location is the cytoplasm. It is found in the cytosol. The protein localises to the mitochondrion matrix. The enzyme catalyses Fe(III)-heme b-[protein] + nitric oxide + H2O = Fe(II)-heme b-[protein] + nitrite + 2 H(+). Functionally, monomeric globin with a bis-histidyl six-coordinate heme-iron atom through which it can bind dioxygen, carbon monoxide and nitric oxide. Could help transport oxygen and increase its availability to the metabolically active neuronal tissues, though its low quantity in tissues as well as its high affinity for dioxygen, which may limit its oxygen-releasing ability, argue against it. The ferrous/deoxygenated form exhibits a nitrite reductase activity and it could produce nitric oxide which in turn inhibits cellular respiration in response to hypoxia. In its ferrous/deoxygenated state, it may also exhibit GDI (Guanine nucleotide Dissociation Inhibitor) activity toward heterotrimeric G-alpha proteins, thereby regulating signal transduction to facilitate neuroprotective responses in the wake of hypoxia and associated oxidative stress. The chain is Neuroglobin from Macaca mulatta (Rhesus macaque).